Consider the following 248-residue polypeptide: ATP synthase subunit a, chloroplastic (248 aa).

Helical transmembrane passes span glycine 37–glycine 57, valine 96–valine 116, isoleucine 135–histidine 155, leucine 200–leucine 220, and glycine 221–glycine 241.

The protein belongs to the ATPase A chain family. As to quaternary structure, F-type ATPases have 2 components, CF(1) - the catalytic core - and CF(0) - the membrane proton channel. CF(1) has five subunits: alpha(3), beta(3), gamma(1), delta(1), epsilon(1). CF(0) has four main subunits: a, b, b' and c.

It is found in the plastid. It localises to the chloroplast thylakoid membrane. Key component of the proton channel; it plays a direct role in the translocation of protons across the membrane. This is ATP synthase subunit a, chloroplastic from Staurastrum punctulatum (Green alga).